Here is a 146-residue protein sequence, read N- to C-terminus: Large ribosomal subunit protein uL15 (146 aa).

The segment at methionine 1–glutamate 51 is disordered. Composition is skewed to gly residues over residues threonine 23–glutamine 35 and serine 42–glutamate 51.

This sequence belongs to the universal ribosomal protein uL15 family. In terms of assembly, part of the 50S ribosomal subunit.

In terms of biological role, binds to the 23S rRNA. This chain is Large ribosomal subunit protein uL15, found in Streptococcus gordonii (strain Challis / ATCC 35105 / BCRC 15272 / CH1 / DL1 / V288).